We begin with the raw amino-acid sequence, 450 residues long: Phosphoglucosamine mutase (450 aa).

Catalysis depends on S103, which acts as the Phosphoserine intermediate. Mg(2+) contacts are provided by S103, D243, D245, and D247. Phosphoserine is present on S103.

It belongs to the phosphohexose mutase family. The cofactor is Mg(2+). Activated by phosphorylation.

It catalyses the reaction alpha-D-glucosamine 1-phosphate = D-glucosamine 6-phosphate. Functionally, catalyzes the conversion of glucosamine-6-phosphate to glucosamine-1-phosphate. The polypeptide is Phosphoglucosamine mutase (Latilactobacillus sakei subsp. sakei (strain 23K) (Lactobacillus sakei subsp. sakei)).